We begin with the raw amino-acid sequence, 846 residues long: MKMADRSGKIIPGQVYIEVEYDYEYEAKDRKIVIKQGERYILVKKTNDDWWQVKPDENSKAFYVPAQYVKEVTRKALMPPVKQVAGLPNNSTKIMQSLHLQRSTENVNKLPELSSFGKPSSSVQGTGLIRDANQNFGPSYNQGQTVNLSLDLTHNNGKFNNDSHSPKVSSQNRTRSFGHFPGPEFLDVEKTSFSQEQSCDSAGEGSERIHQDSESGDELSSSSTEQIRATTPPNQGRPDSPVYANLQELKISQSALPPLPGSPAIQINGEWETHKDSSGRCYYYNRGTQERTWKPPRWTRDASISKGDFQNPGDQELLSSEENYYSTSYSQSDSQCGSPPRGWSEELDERGHTLYTSDYTNEKWLKHVDDQGRQYYYSADGSRSEWELPKYNASSQQQREIIKSRSLDRRLQEPIVLTKWRHSTIVLDTNDKESPTASKPCFPENESSPSSPKHQDTASSPKDQEKYGLLNVTKIAENGKKVRKNWLSSWAVLQGSSLLFTKTQGSSTSWFGSNQSKPEFTVDLKGATIEMASKDKSSKKNVFELKTRQGTELLIQSDNDTVINDWFKVLSSTINNQAVETDEGIEEEIPDSPGIEKHDKEKEQKDPKKLRSFKVSSIDSSEQKKTKKNLKKFLTRRPTLQAVREKGYIKDQVFGSNLANLCQRENGTVPKFVKLCIEHVEEHGLDIDGIYRVSGNLAVIQKLRFAVNHDEKLDLNDSKWEDIHVITGALKMFFRELPEPLFTFNHFNDFVNAIKQEPRQRVAAVKDLIRQLPKPNQDTMQILFRHLRRVIENGEKNRMTYQSIAIVFGPTLLKPEKETGNIAVHTVYQNQIVELILLELSSIFGR.

The 63-residue stretch at 12 to 74 (PGQVYIEVEY…PAQYVKEVTR (63 aa)) folds into the SH3 domain. Polar residues predominate over residues 152–175 (LTHNNGKFNNDSHSPKVSSQNRTR). Residues 152–241 (LTHNNGKFNN…PPNQGRPDSP (90 aa)) are disordered. A phosphoserine mark is found at S165 and S176. A compositionally biased stretch (polar residues) spans 191-200 (TSFSQEQSCD). Phosphoserine occurs at positions 201, 213, and 215. The segment covering 224–234 (TEQIRATTPPN) has biased composition (polar residues). Phosphothreonine occurs at positions 230 and 231. S240 carries the post-translational modification Phosphoserine. Y243 is subject to Phosphotyrosine. 2 consecutive WW domains span residues 265–298 (IQINGEWETHKDSSGRCYYYNRGTQERTWKPPRW) and 358–391 (DYTNEKWLKHVDDQGRQYYYSADGSRSEWELPKY). Residues 293 to 316 (WKPPRWTRDASISKGDFQNPGDQE) are disordered. Disordered stretches follow at residues 428 to 466 (DTNDKESPTASKPCFPENESSPSSPKHQDTASSPKDQEK) and 580 to 629 (ETDE…TKKN). The span at 445-461 (NESSPSSPKHQDTASSP) shows a compositional bias: polar residues. One can recognise a PH domain in the interval 463–575 (DQEKYGLLNV…WFKVLSSTIN (113 aa)). The span at 580 to 590 (ETDEGIEEEIP) shows a compositional bias: acidic residues. S592 carries the post-translational modification Phosphoserine. Positions 594-609 (GIEKHDKEKEQKDPKK) are enriched in basic and acidic residues. The region spanning 656-844 (SNLANLCQRE…LILLELSSIF (189 aa)) is the Rho-GAP domain.

Its function is as follows. GTPase activator for the Rho-type GTPases by converting them to an inactive GDP-bound state. The protein is Rho GTPase-activating protein 12 (ARHGAP12) of Homo sapiens (Human).